We begin with the raw amino-acid sequence, 357 residues long: Vomeronasal type-1 receptor 5 (357 aa).

The Extracellular portion of the chain corresponds to 1–3 (MLK). A helical transmembrane segment spans residues 4-24 (LVIIENMAEIMLFSLDLLLFS). Residues 25 to 52 (TDILCFNFPSKMIKLPGFITIQIFFYPQ) are Cytoplasmic-facing. Residues 53-73 (ASFGISANTILLLFHIFTFVF) form a helical membrane-spanning segment. Residues 74 to 81 (SHRSKSID) lie on the Extracellular side of the membrane. The helical transmembrane segment at 82–102 (MIISHLSLIHILLLFTQAILV) threads the bilayer. The Cytoplasmic portion of the chain corresponds to 103 to 130 (SLDFFGSQNTQDDLRYKVIVFLNKVMRG). A helical membrane pass occupies residues 131 to 151 (LSICTPCLLSVLQAIISPSIF). The Extracellular portion of the chain corresponds to 152 to 163 (SLAKLKHPSASH). The helical transmembrane segment at 164 to 184 (ILGFFLFSWVLNMFIGVIFCC) threads the bilayer. Topologically, residues 185 to 269 (TLRLPPVKRG…RVSPVKRASQ (85 aa)) are cytoplasmic. The helical transmembrane segment at 270 to 290 (AILLLVSFVFTYWVDFTFSFS) threads the bilayer. The Extracellular segment spans residues 291 to 300 (GGVTWINDSL). An N-linked (GlcNAc...) asparagine glycan is attached at asparagine 297. The chain crosses the membrane as a helical span at residues 301-321 (LVWLQVIVANSYAAISPLMLI). Over 322 to 357 (YADNQIFKTLQMLWFKYLSPPKLMLKFNRQCGSTKK) the chain is Cytoplasmic.

It belongs to the G-protein coupled receptor 1 family.

The protein resides in the cell membrane. Putative pheromone receptor. In Homo sapiens (Human), this protein is Vomeronasal type-1 receptor 5 (VN1R5).